Reading from the N-terminus, the 725-residue chain is Phosphoribosylformylglycinamidine synthase subunit PurL (725 aa).

His-41 is a catalytic residue. Residues Tyr-44 and Lys-83 each coordinate ATP. Position 85 (Glu-85) interacts with Mg(2+). Residues 86-89 and Arg-108 each bind substrate; that span reads SHNH. His-87 functions as the Proton acceptor in the catalytic mechanism. Asp-109 contacts Mg(2+). Gln-231 provides a ligand contact to substrate. A Mg(2+)-binding site is contributed by Asp-259. Substrate is bound at residue 303-305; the sequence is ESQ. 2 residues coordinate ATP: Asp-485 and Gly-522. Residue Asn-523 coordinates Mg(2+). Ser-525 serves as a coordination point for substrate.

It belongs to the FGAMS family. As to quaternary structure, monomer. Part of the FGAM synthase complex composed of 1 PurL, 1 PurQ and 2 PurS subunits.

The protein localises to the cytoplasm. The enzyme catalyses N(2)-formyl-N(1)-(5-phospho-beta-D-ribosyl)glycinamide + L-glutamine + ATP + H2O = 2-formamido-N(1)-(5-O-phospho-beta-D-ribosyl)acetamidine + L-glutamate + ADP + phosphate + H(+). The protein operates within purine metabolism; IMP biosynthesis via de novo pathway; 5-amino-1-(5-phospho-D-ribosyl)imidazole from N(2)-formyl-N(1)-(5-phospho-D-ribosyl)glycinamide: step 1/2. Functionally, part of the phosphoribosylformylglycinamidine synthase complex involved in the purines biosynthetic pathway. Catalyzes the ATP-dependent conversion of formylglycinamide ribonucleotide (FGAR) and glutamine to yield formylglycinamidine ribonucleotide (FGAM) and glutamate. The FGAM synthase complex is composed of three subunits. PurQ produces an ammonia molecule by converting glutamine to glutamate. PurL transfers the ammonia molecule to FGAR to form FGAM in an ATP-dependent manner. PurS interacts with PurQ and PurL and is thought to assist in the transfer of the ammonia molecule from PurQ to PurL. This is Phosphoribosylformylglycinamidine synthase subunit PurL from Thermus thermophilus (strain ATCC BAA-163 / DSM 7039 / HB27).